The primary structure comprises 322 residues: Secretion system apparatus protein SsaQ (322 aa).

This sequence belongs to the FliN/MopA/SpaO family.

Its function is as follows. Part of a type III secretion system. The chain is Secretion system apparatus protein SsaQ (ssaQ) from Salmonella typhimurium (strain LT2 / SGSC1412 / ATCC 700720).